The primary structure comprises 493 residues: MFKFALALTLCLAGSLSLAQHNPHWWGNRNTIVHLFEWKWSDIAEECESFLGPRGFAGVQVSPVNENIISAGRPWWERYQPISYKLTTRSGNEEEFGDMVRRCNEVGVRIYVDVLLNHMSGDFDGVAIGTAGTEAEPSKKSFPGVPFSAQDFPPSCEITDWNNRFQVQQCELVGLKDLDQSSDWVRSKLIEFLDHLIELGVAGFRVDAAKHMASEDLEYIYRSLSDLNTDHGFPHNARPFIFQEVIDHGHETVSRDEYKDLGAVTEFRFSEEIGNAFRGNNALRWLQSWGTGWGFLPSGQALTFVDNHDNQRDAGAVLNYKSPRQYKMATAFHLAYPYGISRVMSSFAFDDHDTPPPQDAQERIISPEFDEDGACVNGWICEHRWRQIYAMVGFKNAVRDTEMAEWWDNGDSQISFCRGNKGFLAVNNNQYDLSQELNTCLPAGEYCDVISGSLINGSCTGKSVTVKDNGYGYIHIGVDDFDGMMALHVDAKV.

The signal sequence occupies residues 1–19 (MFKFALALTLCLAGSLSLA). Position 20 is a pyrrolidone carboxylic acid (Gln20). Residues Cys47 and Cys103 are joined by a disulfide bond. 3 residues coordinate Ca(2+): Asn117, Gln168, and Asp177. Cys156 and Cys170 are disulfide-bonded. Arg205 contributes to the chloride binding site. Asp207 serves as the catalytic Nucleophile. Residue His211 participates in Ca(2+) binding. The active-site Proton donor is the Glu244. Chloride-binding residues include Asn307 and Arg342. 3 disulfides stabilise this stretch: Cys375-Cys381, Cys417-Cys440, and Cys447-Cys459.

Belongs to the glycosyl hydrolase 13 family. As to quaternary structure, monomer. Ca(2+) is required as a cofactor. Requires chloride as cofactor.

It is found in the secreted. The catalysed reaction is Endohydrolysis of (1-&gt;4)-alpha-D-glucosidic linkages in polysaccharides containing three or more (1-&gt;4)-alpha-linked D-glucose units.. The protein is Alpha-amylase-related protein (Amyrel) of Drosophila elegans (Fruit fly).